The chain runs to 190 residues: Imidazole glycerol phosphate synthase subunit HisH (190 aa).

The Glutamine amidotransferase type-1 domain occupies 2-190 (IVGVVDYTVG…IKRFLAVAKR (189 aa)). Cysteine 73 acts as the Nucleophile in catalysis. Residues histidine 169 and glutamate 171 contribute to the active site.

In terms of assembly, heterodimer of HisH and HisF.

The protein localises to the cytoplasm. It catalyses the reaction 5-[(5-phospho-1-deoxy-D-ribulos-1-ylimino)methylamino]-1-(5-phospho-beta-D-ribosyl)imidazole-4-carboxamide + L-glutamine = D-erythro-1-(imidazol-4-yl)glycerol 3-phosphate + 5-amino-1-(5-phospho-beta-D-ribosyl)imidazole-4-carboxamide + L-glutamate + H(+). The catalysed reaction is L-glutamine + H2O = L-glutamate + NH4(+). It functions in the pathway amino-acid biosynthesis; L-histidine biosynthesis; L-histidine from 5-phospho-alpha-D-ribose 1-diphosphate: step 5/9. Functionally, IGPS catalyzes the conversion of PRFAR and glutamine to IGP, AICAR and glutamate. The HisH subunit catalyzes the hydrolysis of glutamine to glutamate and ammonia as part of the synthesis of IGP and AICAR. The resulting ammonia molecule is channeled to the active site of HisF. This Pyrobaculum aerophilum (strain ATCC 51768 / DSM 7523 / JCM 9630 / CIP 104966 / NBRC 100827 / IM2) protein is Imidazole glycerol phosphate synthase subunit HisH.